The primary structure comprises 508 residues: UTP--glucose-1-phosphate uridylyltransferase (508 aa).

Residue Ser13 is modified to Phosphoserine. UTP is bound by residues 113–116 (LNGG), Lys127, Gln190, and Gly222. 115–116 (GG) is a substrate binding site. Position 127 (Lys127) interacts with Mg(2+). Residues His223 and 251 to 253 (NID) each bind substrate. 2 residues coordinate UTP: Asp253 and Lys396. Mg(2+) is bound at residue Asp253. Residue Lys396 is part of the active site. Position 426 is a phosphothreonine (Thr426). Ser434 carries the post-translational modification Phosphoserine. Position 438 is an N6-acetyllysine (Lys438). Ser448 and Ser461 each carry phosphoserine. The tract at residues 457-508 (HLTVSGDVTFGKNVSLKGTVIIIXNHGDRIDIPPGAVLENKIVSGNLRILDH) is oligomerization. Positions 502–503 (NL) are critical for end-to-end subunit interaction.

This sequence belongs to the UDPGP type 1 family. Homooctamer.

The protein localises to the cytoplasm. The catalysed reaction is alpha-D-glucose 1-phosphate + UTP + H(+) = UDP-alpha-D-glucose + diphosphate. It functions in the pathway glycan biosynthesis; glycogen biosynthesis. In terms of biological role, UTP--glucose-1-phosphate uridylyltransferase catalyzing the conversion of glucose-1-phosphate into UDP-glucose, a crucial precursor for the production of glycogen. This Sus scrofa (Pig) protein is UTP--glucose-1-phosphate uridylyltransferase (UGP2).